The primary structure comprises 329 residues: MTDLTATPAPAEPAASAYDPTAKQKAQAKTARIPIKIVPIEKLKKPEWIRVKAATSSSRFNEIKTILREHNLHTVCEEASCPNIGECFGKGTATFMIMGDKCTRRCPFCDVGHGRPDPLDADEPKNLARTIAALKLKYVVITSVDRDDLRDGGAGHFVECIREVREQSPATRIEILTPDFRGRLDRALAILNAAPPDVMNHNLETVPRLYKEARPGSDYAHSLKLLKDFKALHPDVATKSGLMVGLGETTDEILQVMRDLRAHDVDMLTIGQYLQPSEHHLPVREYVHPDTFKMYEEEAYKMGFTHAAVGAMVRSSYHADLQAHGAGVV.

The interval 1 to 23 (MTDLTATPAPAEPAASAYDPTAK) is disordered. Positions 76, 81, 87, 102, 106, 109, and 316 each coordinate [4Fe-4S] cluster. A Radical SAM core domain is found at 87 to 305 (CFGKGTATFM…EEEAYKMGFT (219 aa)).

Belongs to the radical SAM superfamily. Lipoyl synthase family. [4Fe-4S] cluster serves as cofactor.

Its subcellular location is the cytoplasm. The catalysed reaction is [[Fe-S] cluster scaffold protein carrying a second [4Fe-4S](2+) cluster] + N(6)-octanoyl-L-lysyl-[protein] + 2 oxidized [2Fe-2S]-[ferredoxin] + 2 S-adenosyl-L-methionine + 4 H(+) = [[Fe-S] cluster scaffold protein] + N(6)-[(R)-dihydrolipoyl]-L-lysyl-[protein] + 4 Fe(3+) + 2 hydrogen sulfide + 2 5'-deoxyadenosine + 2 L-methionine + 2 reduced [2Fe-2S]-[ferredoxin]. It participates in protein modification; protein lipoylation via endogenous pathway; protein N(6)-(lipoyl)lysine from octanoyl-[acyl-carrier-protein]: step 2/2. Its function is as follows. Catalyzes the radical-mediated insertion of two sulfur atoms into the C-6 and C-8 positions of the octanoyl moiety bound to the lipoyl domains of lipoate-dependent enzymes, thereby converting the octanoylated domains into lipoylated derivatives. This chain is Lipoyl synthase, found in Burkholderia mallei (strain NCTC 10247).